A 143-amino-acid chain; its full sequence is Large-conductance mechanosensitive channel (143 aa).

The next 3 helical transmembrane spans lie at 16 to 36, 40 to 60, and 87 to 107; these read VMDL…TNSL, IIMP…NMFI, and GSFI…FMMV.

Belongs to the MscL family. In terms of assembly, homopentamer.

It is found in the cell inner membrane. In terms of biological role, channel that opens in response to stretch forces in the membrane lipid bilayer. May participate in the regulation of osmotic pressure changes within the cell. The sequence is that of Large-conductance mechanosensitive channel from Psychrobacter sp. (strain PRwf-1).